A 948-amino-acid polypeptide reads, in one-letter code: Putative JmjC domain-containing histone demethylation protein 1 (948 aa).

Positions 243 to 402 (VSTTKLAYYV…PQLSIYNLEL (160 aa)) constitute a JmjC domain. Thr294 provides a ligand contact to substrate. The Fe cation site is built by His297 and Glu299. Lys314 provides a ligand contact to substrate.

Belongs to the JHDM1 histone demethylase family. Requires Fe(2+) as cofactor.

The protein resides in the nucleus. The catalysed reaction is N(6),N(6)-dimethyl-L-lysyl(36)-[histone H3] + 2 2-oxoglutarate + 2 O2 = L-lysyl(36)-[histone H3] + 2 formaldehyde + 2 succinate + 2 CO2. Functionally, may be a histone demethylase that specifically demethylates 'Lys-36' of histone H3, thereby playing a central role in histone code. Represses transcriptional silencing by negatively affecting heterochromatin stability. The sequence is that of Putative JmjC domain-containing histone demethylation protein 1 (jhd1) from Schizosaccharomyces pombe (strain 972 / ATCC 24843) (Fission yeast).